The following is a 389-amino-acid chain: Probable DNA double-strand break repair nuclease NurA (389 aa).

2 residues coordinate Mn(2+): aspartate 74 and aspartate 151.

The protein belongs to the NurA family. Requires Mn(2+) as cofactor.

Its function is as follows. Involved in DNA double-strand break (DSB) repair. Probably acts with HerA to stimulate resection of the 5' strand and produce the long 3' single-strand that is required for RadA loading. This chain is Probable DNA double-strand break repair nuclease NurA, found in Methanocaldococcus jannaschii (strain ATCC 43067 / DSM 2661 / JAL-1 / JCM 10045 / NBRC 100440) (Methanococcus jannaschii).